Here is a 31-residue protein sequence, read N- to C-terminus: Alcohol dehydrogenase 1 (31 aa).

Cys-7 contributes to the Zn(2+) binding site.

The protein belongs to the zinc-containing alcohol dehydrogenase family. Class-P subfamily. In terms of assembly, homodimer. Requires Zn(2+) as cofactor.

The protein resides in the cytoplasm. The enzyme catalyses a primary alcohol + NAD(+) = an aldehyde + NADH + H(+). It carries out the reaction a secondary alcohol + NAD(+) = a ketone + NADH + H(+). In Catharanthus roseus (Madagascar periwinkle), this protein is Alcohol dehydrogenase 1.